The primary structure comprises 248 residues: Coenzyme F420:L-glutamate ligase (248 aa).

GTP-binding positions include 15 to 18 (IPLI), 45 to 46 (ET), and Lys50. Residue Asp115 participates in a divalent metal cation binding. Residue Asn118 participates in GTP binding. Residues Asp155, Ser156, and Gln213 each contribute to the a divalent metal cation site. A GTP-binding site is contributed by 211–218 (MGQSNEGI).

This sequence belongs to the CofE family. In terms of assembly, homodimer. Mg(2+) is required as a cofactor. The cofactor is Mn(2+). It depends on K(+) as a cofactor.

The enzyme catalyses oxidized coenzyme F420-0 + GTP + L-glutamate = oxidized coenzyme F420-1 + GDP + phosphate + H(+). The catalysed reaction is oxidized coenzyme F420-1 + GTP + L-glutamate = oxidized coenzyme F420-2 + GDP + phosphate + H(+). Its pathway is cofactor biosynthesis; coenzyme F420 biosynthesis. Catalyzes the GTP-dependent successive addition of two or more gamma-linked L-glutamates to the L-lactyl phosphodiester of 7,8-didemethyl-8-hydroxy-5-deazariboflavin (F420-0) to form coenzyme F420-0-glutamyl-glutamate (F420-2) or polyglutamated F420 derivatives. The polypeptide is Coenzyme F420:L-glutamate ligase (Methanococcus maripaludis (strain C7 / ATCC BAA-1331)).